Here is a 474-residue protein sequence, read N- to C-terminus: Nuclear receptor ROR-alpha B (474 aa).

Positions S14–F89 form a DNA-binding region, nuclear receptor. 2 consecutive NR C4-type zinc fingers follow at residues C17 to C37 and C53 to C72. A compositionally biased stretch (basic and acidic residues) spans D98 to Q124. Residues D98–S144 are disordered. In terms of domain architecture, NR LBD spans D223–L461. Residues V450–L461 form an AF-2 region.

Belongs to the nuclear hormone receptor family.

The protein resides in the nucleus. Its function is as follows. Nuclear receptor that binds DNA as a monomer to ROR response elements (RORE). Required for proper cerebellum development. The polypeptide is Nuclear receptor ROR-alpha B (rorab) (Danio rerio (Zebrafish)).